The chain runs to 794 residues: MSLLLSNSVLVGPKFRSSRISHASASLDIGLQRATSPQNASVPTCFEETKGRIAKLFHKNELSVSTYDTAWVAMVPSPTSSEEPCFPACLNWLLENQCHDGSWARPHHHHMLKKDVLSSTLACILALKKWGVGEEQINRGLHFVELNFASATEKGQITPMGFDIIFPAMLDNARGLSLNLQLEPTMLNDLIYKRDLELKRCNQSNSAEKEVYWAHIAEGMGKLHDWESVMKYQRKNGSLFNCPSTTAAAFTALRNSDCLNYLCLALEKFGSAVPAVYPLDIYSQLCTVGNLERLGISRYFLTEIQSVLDETYRSWLQGDEEIFMDASTCALAFRTLRMNGYNVTSDPITKILQECFSSSFRGNMTDNNTTLEIYRASELILYPEERDLVQHNLRLKTFLEQELSSNGFIQSCQLGRNINAEVNQAIEYPFYAIMDRMAKRKNIENYNIDNTRILKTSYRSPNFGNKDFLSLSVEDFNRCQVIHREELRELERWVIENRLDELKFARSKAAYCYFSAAATIFSPELSDARMSWAKNGVLTTVVDDFFDVGGSVEELKNLIQLVELWDVDVSTQCCSPNVQIIFSALKHTICEIADKGFKLQGRSITDHIISIWLDLLYSMMKETELGIDKSFPTMDEYMSNAYVSFALGPIVLPALYLVGPKLSEEMVNHSEYHTLFKLMSTCGRLLNDIRGYERELKDGKISAVSLYIMNNGGEITTEAAISEMRSWIERDRRELLRLVLEENKSVLPKACKKLFWHMCTVVHVFYSKDDGFTSLNLHGVVNAIINEPIVLNQF.

A chloroplast-targeting transit peptide spans 1-28; the sequence is MSLLLSNSVLVGPKFRSSRISHASASLD. Residues D543, D547, N687, and E695 each coordinate Mg(2+). The DDXXD motif motif lies at 543-547; the sequence is DDFFD.

This sequence belongs to the terpene synthase family. The cofactor is Mg(2+). As to expression, accumulates in leaves, and, at low levels, in germinating seeds.

The protein resides in the plastid. It localises to the chloroplast. It carries out the reaction ent-copalyl diphosphate = ent-kaur-16-ene + diphosphate. Its pathway is secondary metabolite biosynthesis; terpenoid biosynthesis. It participates in plant hormone biosynthesis; gibberellin biosynthesis. Involved in the biosynthesis of ent-kaurene diterpenoids natural products such as oridonin, miltiradiene, eriocalyxin B and nezukol, known to exhibit antitumor, anti-inflammatory and antibacterial activities, and in the production of gibberellins phytohormones. Catalyzes the conversion of ent-copalyl diphosphate (ent-CPP) to ent-kaurene. This chain is Ent-kaurene synthase 1, chloroplastic, found in Isodon eriocalyx (Plectranthus eriocalyx).